We begin with the raw amino-acid sequence, 376 residues long: Pulmonary surfactant-associated protein B (376 aa).

The first 24 residues, Met1–Ser24, serve as a signal peptide directing secretion. In terms of domain architecture, Saposin A-type spans Ala25–Ala63. The propeptide occupies Ala25–Gln190. Saposin B-type domains follow at residues Ala63–Gln145, Pro194–Asp271, and Gln290–Ala365. Intrachain disulfides connect Cys67-Cys141, Cys70-Cys135, Cys98-Cys110, Cys198-Cys267, Cys201-Cys261, Cys225-Cys236, Cys294-Cys361, Cys297-Cys355, and Cys320-Cys330. A propeptide spanning residues Ala270–Leu376 is cleaved from the precursor. Asn306 carries an N-linked (GlcNAc...) asparagine glycan.

As to quaternary structure, homodimer; disulfide-linked.

It localises to the secreted. It is found in the extracellular space. Its subcellular location is the surface film. Pulmonary surfactant-associated proteins promote alveolar stability by lowering the surface tension at the air-liquid interface in the peripheral air spaces. SP-B increases the collapse pressure of palmitic acid to nearly 70 millinewtons per meter. The sequence is that of Pulmonary surfactant-associated protein B (Sftpb) from Rattus norvegicus (Rat).